Here is a 63-residue protein sequence, read N- to C-terminus: MVFQLVCSTCGRDISEERYALLIKKIDLKTVLRGVKNNCCRLKLSTQIEPQRNLTVEPLLDIN.

The protein belongs to the poxviridae DNA-directed RNA polymerase 7 kDa subunit family. The DNA-dependent RNA polymerase used for intermediate and late genes expression consists of eight subunits 147 kDa, 133 kDa, 35 kDa, 30 kDa, 22 kDa, 19 kDa, 18 kDa and 7 kDa totalling more than 500 kDa in mass. The same holoenzyme, with the addition of the transcription-specificity factor RAP94, is used for early gene expression.

It is found in the virion. It catalyses the reaction RNA(n) + a ribonucleoside 5'-triphosphate = RNA(n+1) + diphosphate. Part of the DNA-dependent RNA polymerase which catalyzes the transcription of viral DNA into RNA using the four ribonucleoside triphosphates as substrates. Responsible for the transcription of early, intermediate and late genes. DNA-dependent RNA polymerase associates with the early transcription factor (ETF) thereby allowing the early genes transcription. Late transcription, and probably also intermediate transcription, require newly synthesized RNA polymerase. This Myxoma virus (strain Lausanne) (MYXV) protein is DNA-directed RNA polymerase 7 kDa subunit (RPO7).